The chain runs to 126 residues: Large ribosomal subunit protein bL17 (126 aa).

This sequence belongs to the bacterial ribosomal protein bL17 family. Part of the 50S ribosomal subunit. Contacts protein L32.

This is Large ribosomal subunit protein bL17 from Aliivibrio salmonicida (strain LFI1238) (Vibrio salmonicida (strain LFI1238)).